We begin with the raw amino-acid sequence, 173 residues long: Protein-export protein SecB (173 aa).

Residues 148–173 (QQQKQRREQGTSDSAPSGSPDNGGRQ) are disordered. The segment covering 158 to 167 (TSDSAPSGSP) has biased composition (polar residues).

It belongs to the SecB family. Homotetramer, a dimer of dimers. One homotetramer interacts with 1 SecA dimer.

The protein localises to the cytoplasm. Functionally, one of the proteins required for the normal export of preproteins out of the cell cytoplasm. It is a molecular chaperone that binds to a subset of precursor proteins, maintaining them in a translocation-competent state. It also specifically binds to its receptor SecA. The chain is Protein-export protein SecB from Halorhodospira halophila (strain DSM 244 / SL1) (Ectothiorhodospira halophila (strain DSM 244 / SL1)).